The primary structure comprises 928 residues: DNA-binding protein RFX6 (928 aa).

Disordered stretches follow at residues 1–22 (MAKVPVLEDAFLPAQPSPQVSP) and 53–102 (PGGA…AADL). Positions 92 to 101 (SHDSKTKAAD) are enriched in basic and acidic residues. A DNA-binding region (RFX-type winged-helix) is located at residues 124–199 (TLQWLEENYI…YHYYGIGIKE (76 aa)).

This sequence belongs to the RFX family. Interacts with RFX3.

Its subcellular location is the nucleus. In terms of biological role, transcription factor required to direct islet cell differentiation during endocrine pancreas development. Specifically required for the differentiation of 4 of the 5 islet cell types and for the production of insulin. Not required for pancreatic PP (polypeptide-producing) cells differentiation. Acts downstream of NEUROG3 and regulates the transcription factors involved in beta-cell maturation and function, thereby restricting the expression of the beta-cell differentiation and specification genes, and thus the beta-cell fate choice. Activates transcription by forming a heterodimer with RFX3 and binding to the X-box in the promoter of target genes. Involved in glucose-stimulated insulin secretion by promoting insulin and L-type calcium channel gene transcription. The chain is DNA-binding protein RFX6 (RFX6) from Ailuropoda melanoleuca (Giant panda).